Consider the following 135-residue polypeptide: Large ribosomal subunit protein uL16c (135 aa).

Over residues 1 to 23 the composition is skewed to basic residues; sequence MLSPKKTKFRKEHRGRMKGRSSR. The tract at residues 1-24 is disordered; that stretch reads MLSPKKTKFRKEHRGRMKGRSSRG.

Belongs to the universal ribosomal protein uL16 family. In terms of assembly, part of the 50S ribosomal subunit.

Its subcellular location is the plastid. The protein resides in the chloroplast. In Pelargonium hortorum (Common geranium), this protein is Large ribosomal subunit protein uL16c.